Consider the following 533-residue polypeptide: Glucose-6-phosphate isomerase (533 aa).

Glutamate 341 acts as the Proton donor in catalysis. Residues histidine 372 and lysine 501 contribute to the active site.

It belongs to the GPI family.

The protein localises to the cytoplasm. The enzyme catalyses alpha-D-glucose 6-phosphate = beta-D-fructose 6-phosphate. The protein operates within carbohydrate biosynthesis; gluconeogenesis. It participates in carbohydrate degradation; glycolysis; D-glyceraldehyde 3-phosphate and glycerone phosphate from D-glucose: step 2/4. Catalyzes the reversible isomerization of glucose-6-phosphate to fructose-6-phosphate. In Cereibacter sphaeroides (strain KD131 / KCTC 12085) (Rhodobacter sphaeroides), this protein is Glucose-6-phosphate isomerase.